A 503-amino-acid chain; its full sequence is Probable cytosol aminopeptidase (503 aa).

Positions 270 and 275 each coordinate Mn(2+). Lysine 282 is a catalytic residue. 3 residues coordinate Mn(2+): aspartate 293, aspartate 352, and glutamate 354. Arginine 356 is an active-site residue.

It belongs to the peptidase M17 family. The cofactor is Mn(2+).

It localises to the cytoplasm. It catalyses the reaction Release of an N-terminal amino acid, Xaa-|-Yaa-, in which Xaa is preferably Leu, but may be other amino acids including Pro although not Arg or Lys, and Yaa may be Pro. Amino acid amides and methyl esters are also readily hydrolyzed, but rates on arylamides are exceedingly low.. It carries out the reaction Release of an N-terminal amino acid, preferentially leucine, but not glutamic or aspartic acids.. Presumably involved in the processing and regular turnover of intracellular proteins. Catalyzes the removal of unsubstituted N-terminal amino acids from various peptides. In Edwardsiella ictaluri (strain 93-146), this protein is Probable cytosol aminopeptidase.